The chain runs to 1527 residues: Lysophospholipase nte1 (1527 aa).

Over 1 to 69 the chain is Cytoplasmic; that stretch reads MADDGGPFPL…PPPAPSTMVG (69 aa). A helical membrane pass occupies residues 70-90; the sequence is WIGWVFSFVFQVIPSILYWAI. Over 91–112 the chain is Lumenal; sequence TFCTITLPTWLFTLFSMSLTFT. A helical membrane pass occupies residues 113–133; the sequence is MNFTTLLLIALAIVSTVSWFI. Residues 134–1527 lie on the Cytoplasmic side of the membrane; that stretch reads RYRFLNMYSR…RTLAPRRASI (1394 aa). 4 disordered regions span residues 240 to 259, 299 to 387, 576 to 596, and 750 to 785; these read ADHE…GQNV, LSSS…HPDI, EKEQ…PFHR, and AHGE…RRQS. Positions 355–373 are enriched in basic and acidic residues; that stretch reads HLEESRGTPDHDHQPESRT. A nucleoside 3',5'-cyclic phosphate is bound by residues 685-804 and 846-966; these read GGTS…VGSV and RLTS…IAQR. Low complexity predominate over residues 761–771; that stretch reads RTTTASSRTSS. The 165-residue stretch at 1224–1388 folds into the PNPLA domain; it reads LVLGGGGARG…IDNLTVPHMK (165 aa). Residues 1228–1233 carry the GXGXXG motif; it reads GGGARG. The short motif at 1255 to 1259 is the GXSXG element; that stretch reads GTSIG. The active-site Nucleophile is the serine 1257. Catalysis depends on aspartate 1375, which acts as the Proton acceptor. The short motif at 1375 to 1377 is the DGA/G element; it reads DGG.

It belongs to the NTE family.

The protein localises to the endoplasmic reticulum membrane. It catalyses the reaction a 1-acyl-sn-glycero-3-phosphocholine + H2O = sn-glycerol 3-phosphocholine + a fatty acid + H(+). With respect to regulation, inhibited by organophosphorus esters. Intracellular phospholipase B that catalyzes the double deacylation of phosphatidylcholine (PC) to glycerophosphocholine (GroPCho). Plays an important role in membrane lipid homeostasis. Responsible for the rapid PC turnover in response to inositol, elevated temperatures, or when choline is present in the growth medium. The protein is Lysophospholipase nte1 (nte1) of Aspergillus terreus (strain NIH 2624 / FGSC A1156).